The following is a 75-amino-acid chain: RNA-binding protein Hfq (75 aa).

Positions 9 to 69 (DQFLNQLRKE…ISTFAPERNI (61 aa)) constitute a Sm domain.

This sequence belongs to the Hfq family. Homohexamer.

Its function is as follows. RNA chaperone that binds small regulatory RNA (sRNAs) and mRNAs to facilitate mRNA translational regulation in response to envelope stress, environmental stress and changes in metabolite concentrations. Also binds with high specificity to tRNAs. The chain is RNA-binding protein Hfq from Geobacillus kaustophilus (strain HTA426).